Here is a 641-residue protein sequence, read N- to C-terminus: PWWP domain-containing DNA repair factor 3A (641 aa).

The interval 98–329 (LNERQGSSSR…LEEDEDDEEP (232 aa)) is disordered. Ser156 carries the phosphoserine modification. 2 stretches are compositionally biased toward basic and acidic residues: residues 194-203 (QDREASRKQQ) and 295-307 (ADTR…RPLS). Ser307 carries the phosphoserine modification. Residues 343 to 404 (VGMLVWHKYQ…KHFDCKEKQA (62 aa)) enclose the PWWP domain. The disordered stretch occupies residues 463–486 (TRFPQLSGGDPEEPVAGSPQGRRP).

Belongs to the PWWP3A family. In terms of assembly, interacts with TP53BP1 (via BRCT domain); the interaction is not dependent on its phosphorylation status. Binds nucleosomes. Interacts with trimethylated 'Lys-36' of histone H3 (H3K36me3) (in vitro).

It localises to the nucleus. In terms of biological role, involved in the DNA damage response pathway by contributing to the maintenance of chromatin architecture. Recruited to the vicinity of DNA breaks by TP53BP1 and plays an accessory role to facilitate damage-induced chromatin changes and promoting chromatin relaxation. Required for efficient DNA repair and cell survival following DNA damage. The polypeptide is PWWP domain-containing DNA repair factor 3A (PWWP3A) (Bos taurus (Bovine)).